The following is a 189-amino-acid chain: dCTP deaminase (189 aa).

Residues 112 to 117 (KSTYAR), 136 to 138 (TLE), glutamine 157, tyrosine 171, and glutamine 181 each bind dCTP. Glutamate 138 serves as the catalytic Proton donor/acceptor.

Belongs to the dCTP deaminase family. In terms of assembly, homotrimer.

It carries out the reaction dCTP + H2O + H(+) = dUTP + NH4(+). It functions in the pathway pyrimidine metabolism; dUMP biosynthesis; dUMP from dCTP (dUTP route): step 1/2. Functionally, catalyzes the deamination of dCTP to dUTP. The protein is dCTP deaminase of Paraburkholderia xenovorans (strain LB400).